The sequence spans 314 residues: ATP synthase gamma chain (314 aa).

It belongs to the ATPase gamma chain family. As to quaternary structure, F-type ATPases have 2 components, CF(1) - the catalytic core - and CF(0) - the membrane proton channel. CF(1) has five subunits: alpha(3), beta(3), gamma(1), delta(1), epsilon(1). CF(0) has three main subunits: a, b and c.

Its subcellular location is the cellular thylakoid membrane. Produces ATP from ADP in the presence of a proton gradient across the membrane. The gamma chain is believed to be important in regulating ATPase activity and the flow of protons through the CF(0) complex. This Rippkaea orientalis (strain PCC 8801 / RF-1) (Cyanothece sp. (strain PCC 8801)) protein is ATP synthase gamma chain.